The following is a 185-amino-acid chain: CASP-like protein 5A1 (185 aa).

At M1 to T45 the chain is on the cytoplasmic side. The helical transmembrane segment at L46–M66 threads the bilayer. At L67–A76 the chain is on the extracellular side. Residues F77–I97 traverse the membrane as a helical segment. Residues D98 to D121 are Cytoplasmic-facing. A helical membrane pass occupies residues G122–I142. The Extracellular segment spans residues G143 to A160. The helical transmembrane segment at I161–L181 threads the bilayer. At L182–L185 the chain is on the cytoplasmic side.

This sequence belongs to the Casparian strip membrane proteins (CASP) family. As to quaternary structure, homodimer and heterodimers.

Its subcellular location is the cell membrane. This is CASP-like protein 5A1 from Picea sitchensis (Sitka spruce).